The following is a 103-amino-acid chain: Nucleoid-associated protein Cgl0243/cg0297 (103 aa).

It belongs to the YbaB/EbfC family. In terms of assembly, homodimer.

It is found in the cytoplasm. The protein localises to the nucleoid. Functionally, binds to DNA and alters its conformation. May be involved in regulation of gene expression, nucleoid organization and DNA protection. The polypeptide is Nucleoid-associated protein Cgl0243/cg0297 (Corynebacterium glutamicum (strain ATCC 13032 / DSM 20300 / JCM 1318 / BCRC 11384 / CCUG 27702 / LMG 3730 / NBRC 12168 / NCIMB 10025 / NRRL B-2784 / 534)).